We begin with the raw amino-acid sequence, 581 residues long: Proline--tRNA ligase (581 aa).

Belongs to the class-II aminoacyl-tRNA synthetase family. ProS type 1 subfamily. Homodimer.

It is found in the cytoplasm. It carries out the reaction tRNA(Pro) + L-proline + ATP = L-prolyl-tRNA(Pro) + AMP + diphosphate. In terms of biological role, catalyzes the attachment of proline to tRNA(Pro) in a two-step reaction: proline is first activated by ATP to form Pro-AMP and then transferred to the acceptor end of tRNA(Pro). As ProRS can inadvertently accommodate and process non-cognate amino acids such as alanine and cysteine, to avoid such errors it has two additional distinct editing activities against alanine. One activity is designated as 'pretransfer' editing and involves the tRNA(Pro)-independent hydrolysis of activated Ala-AMP. The other activity is designated 'posttransfer' editing and involves deacylation of mischarged Ala-tRNA(Pro). The misacylated Cys-tRNA(Pro) is not edited by ProRS. This Paracidovorax citrulli (strain AAC00-1) (Acidovorax citrulli) protein is Proline--tRNA ligase.